We begin with the raw amino-acid sequence, 427 residues long: Enolase (427 aa).

Gln163 serves as a coordination point for (2R)-2-phosphoglycerate. Residue Glu205 is the Proton donor of the active site. Mg(2+)-binding residues include Asp242, Glu285, and Asp312. (2R)-2-phosphoglycerate is bound by residues Lys337, Arg366, Ser367, and Lys388. Catalysis depends on Lys337, which acts as the Proton acceptor.

This sequence belongs to the enolase family. Requires Mg(2+) as cofactor.

The protein localises to the cytoplasm. It localises to the secreted. It is found in the cell surface. The enzyme catalyses (2R)-2-phosphoglycerate = phosphoenolpyruvate + H2O. The protein operates within carbohydrate degradation; glycolysis; pyruvate from D-glyceraldehyde 3-phosphate: step 4/5. Functionally, catalyzes the reversible conversion of 2-phosphoglycerate (2-PG) into phosphoenolpyruvate (PEP). It is essential for the degradation of carbohydrates via glycolysis. This is Enolase from Variovorax paradoxus (strain S110).